Reading from the N-terminus, the 411-residue chain is Adherens junction-associated protein 1 (411 aa).

The first 43 residues, 1-43 (MWIQQLLGLSSMSIRWPGRPLGSHAWILIAMFQLAVDLPACEA), serve as a signal peptide directing secretion. The Extracellular segment spans residues 44–282 (LGPGPEFWLL…GEASGLAVHQ (239 aa)). 3 disordered regions span residues 89-108 (IHGQ…RDQA), 115-197 (AGLA…SNTF), and 239-268 (SLDP…VTQP). Residues 115 to 146 (AGLAKPPAAAKSSPSLASSSSSSSSAVAGGAP) are compositionally biased toward low complexity. Over residues 166–178 (SFDSRGSRPTTET) the composition is skewed to polar residues. Over residues 247 to 263 (PGGVSTTEPSTSPSNNG) the composition is skewed to low complexity. A helical membrane pass occupies residues 283–303 (IITITVSLIMVIAALITTLVL). A targeting signals region spans residues 303–411 (LKNCCAQSGN…VSEKWFEISC (109 aa)). Over 304–411 (KNCCAQSGNT…VSEKWFEISC (108 aa)) the chain is Cytoplasmic. The interval 311–330 (GNTRRNSHQRKTNQQEESCQ) is disordered.

As to quaternary structure, forms a complex with CDH1 and CTNNB1; interacts directly with CTNNB1. Interacts with AP1M2. Interacts with isoform 2 of BSG/CD147. Thr-237 and Ser-239 may be phosphorylated; however as this position is probably extracellular, the in vivo relevance is not proven. Expressed in uterus and pancreas (at protein level).

The protein resides in the basolateral cell membrane. The protein localises to the apical cell membrane. It localises to the cell junction. Its subcellular location is the adherens junction. Its function is as follows. Plays a role in cell adhesion and cell migration. The polypeptide is Adherens junction-associated protein 1 (AJAP1) (Homo sapiens (Human)).